The chain runs to 283 residues: N-terminal Xaa-Pro-Lys N-methyltransferase 2 (283 aa).

S-adenosyl-L-methionine is bound by residues Gly-124, Arg-129, Asp-146, 174 to 175 (LQ), and Gln-190.

The protein belongs to the methyltransferase superfamily. NTM1 family.

The protein localises to the nucleus. It catalyses the reaction N-terminal L-alanyl-L-prolyl-L-lysyl-[protein] + S-adenosyl-L-methionine = N-terminal N-methyl-L-alanyl-L-prolyl-L-lysyl-[protein] + S-adenosyl-L-homocysteine + H(+). It carries out the reaction N-terminal L-prolyl-L-prolyl-L-lysyl-[protein] + S-adenosyl-L-methionine = N-terminal N-methyl-L-prolyl-L-prolyl-L-lysyl-[protein] + S-adenosyl-L-homocysteine + H(+). The enzyme catalyses N-terminal L-seryl-L-prolyl-L-lysyl-[protein] + S-adenosyl-L-methionine = N-terminal N-methyl-L-seryl-L-prolyl-L-lysyl-[protein] + S-adenosyl-L-homocysteine + H(+). Functionally, alpha N-methyltransferase that methylates the N-terminus of target proteins containing the N-terminal motif [Ala/Pro/Ser]-Pro-Lys when the initiator Met is cleaved. Specifically catalyzes monomethylation of exposed alpha-amino group of Ala or Ser residue in the [Ala/Ser]-Pro-Lys motif and Pro in the Pro-Pro-Lys motif. Predominantly functions as a mono-methyltransferase but is also able to di-/tri-methylate the GPKRIA peptide and di-methylate the PPKRIA peptide (in vitro). May activate NTMT1 by priming its substrates for trimethylation. The polypeptide is N-terminal Xaa-Pro-Lys N-methyltransferase 2 (Ntmt2) (Rattus norvegicus (Rat)).